Reading from the N-terminus, the 145-residue chain is Large ribosomal subunit protein uL13 (145 aa).

The protein belongs to the universal ribosomal protein uL13 family. Part of the 50S ribosomal subunit.

In terms of biological role, this protein is one of the early assembly proteins of the 50S ribosomal subunit, although it is not seen to bind rRNA by itself. It is important during the early stages of 50S assembly. In Staphylococcus aureus (strain Mu3 / ATCC 700698), this protein is Large ribosomal subunit protein uL13.